A 165-amino-acid polypeptide reads, in one-letter code: MKNKIFLIGMPGCGKSTIGEIIAKELMLKFIDMDICIEEKTSKTISELFEQGEDYFRDIESETCKEIIKYDNVVIATGGGVVKKDINIETLKNNGLVIFIDRPVEKIISDIDVSRRPLLKNGKERIIGLYKERYDIYKKACHKIVVNGSTIDEVVGEIKKIIINN.

12–17 lines the ATP pocket; that stretch reads GCGKST. Position 16 (S16) interacts with Mg(2+). Residues D34, R57, and G79 each coordinate substrate. ATP is bound at residue R116. Position 133 (R133) interacts with substrate.

The protein belongs to the shikimate kinase family. In terms of assembly, monomer. The cofactor is Mg(2+).

It is found in the cytoplasm. It carries out the reaction shikimate + ATP = 3-phosphoshikimate + ADP + H(+). Its pathway is metabolic intermediate biosynthesis; chorismate biosynthesis; chorismate from D-erythrose 4-phosphate and phosphoenolpyruvate: step 5/7. Its function is as follows. Catalyzes the specific phosphorylation of the 3-hydroxyl group of shikimic acid using ATP as a cosubstrate. This chain is Shikimate kinase, found in Clostridium botulinum (strain Eklund 17B / Type B).